Reading from the N-terminus, the 472-residue chain is Membrane-bound acylglycerophosphatidylinositol O-acyltransferase MBOAT7 (472 aa).

Residues 1–5 are Cytoplasmic-facing; it reads MSPEE. The helical transmembrane segment at 6–22 threads the bilayer; that stretch reads WTYLVVLLISIPIGFLF. Topologically, residues 23–33 are lumenal; the sequence is KKAGPGLKRWG. The chain crosses the membrane as a helical span at residues 34-57; sequence AAAVGLGLTLFTCGPHTLHSLVTI. At 58 to 73 the chain is on the cytoplasmic side; sequence LGTWALIQAQPCSCHA. The helical transmembrane segment at 74-93 threads the bilayer; it reads LALAWTFSYLLFFRALSLLG. The Lumenal portion of the chain corresponds to 94-194; sequence LPTPTPFTNA…VPSLRPLLRR (101 aa). A helical transmembrane segment spans residues 195–212; that stretch reads AWPAPLFGLLFLLSSHLF. The Cytoplasmic portion of the chain corresponds to 213–231; that stretch reads PLEAVREDAFYARPLPARL. A helical membrane pass occupies residues 232–261; sequence FYMIPVFFAFRMRFYVAWIAAECGCIAAGF. The Lumenal portion of the chain corresponds to 262 to 426; that stretch reads GAYPVAAKAR…LSLRDTLRYW (165 aa). A glycan (N-linked (GlcNAc...) asparagine) is linked at Asn-321. Residues 427–447 form a helical membrane-spanning segment; the sequence is ASVYFCVHVLALAALGLGLAL. Topologically, residues 448-472 are cytoplasmic; sequence GRGGPGRRKSGAPAPSPASGKLREE. The disordered stretch occupies residues 450–472; that stretch reads GGPGRRKSGAPAPSPASGKLREE.

Belongs to the membrane-bound acyltransferase family. As to quaternary structure, interacts with SPTSSA; the interaction facilitates MBOAT7 location to mitochondria-associated membranes (MAMs).

The protein resides in the endoplasmic reticulum membrane. It carries out the reaction a 1-acyl-sn-glycero-3-phospho-(1D-myo-inositol) + an acyl-CoA = a 1,2-diacyl-sn-glycero-3-phospho-(1D-myo-inositol) + CoA. The enzyme catalyses a 1-acyl-sn-glycero-3-phospho-(1D-myo-inositol) + (5Z,8Z,11Z,14Z)-eicosatetraenoyl-CoA = a 1-acyl-2-(5Z,8Z,11Z,14Z-eicosatetraenoyl)-sn-glycero-3-phospho-(1D-myo-inositol) + CoA. The catalysed reaction is (5Z,8Z,11Z,14Z)-eicosatetraenoyl-CoA + 1-hexadecanoyl-sn-glycero-3-phosphocholine = 1-hexadecanoyl-2-(5Z,8Z,11Z,14Z-eicosatetraenoyl)-sn-glycero-3-phosphocholine + CoA. It catalyses the reaction 1-octadecanoyl-sn-glycero-3-phospho-(1D-myo-inositol) + (5Z,8Z,11Z,14Z)-eicosatetraenoyl-CoA = 1-octadecanoyl-2-(5Z,8Z,11Z,14Z-eicosatetraenoyl)-sn-glycero-3-phospho-(1D-myo-inositol) + CoA. Its pathway is lipid metabolism; phospholipid metabolism. Acyltransferase which catalyzes the transfer of an acyl group from an acyl-CoA to a lysophosphatidylinositol (1-acylglycerophosphatidylinositol or LPI) leading to the production of a phosphatidylinositol (1,2-diacyl-sn-glycero-3-phosphoinositol or PI) and participates in the reacylation step of the phospholipid remodeling pathway also known as the Lands cycle. Prefers arachidonoyl-CoA as the acyl donor, thus contributing to the regulation of free levels arachidonic acid in cell. In liver, participates in the regulation of triglyceride metabolism through the phosphatidylinositol acyl-chain remodeling regulation. This is Membrane-bound acylglycerophosphatidylinositol O-acyltransferase MBOAT7 (MBOAT7) from Bos taurus (Bovine).